The following is a 251-amino-acid chain: 5'-nucleotidase SurE (251 aa).

Asp-8, Asp-9, Ser-39, and Asn-91 together coordinate a divalent metal cation.

This sequence belongs to the SurE nucleotidase family. A divalent metal cation serves as cofactor.

The protein resides in the cytoplasm. It catalyses the reaction a ribonucleoside 5'-phosphate + H2O = a ribonucleoside + phosphate. Functionally, nucleotidase that shows phosphatase activity on nucleoside 5'-monophosphates. The polypeptide is 5'-nucleotidase SurE (Nitrosococcus oceani (strain ATCC 19707 / BCRC 17464 / JCM 30415 / NCIMB 11848 / C-107)).